The sequence spans 850 residues: Bifunctional levopimaradiene synthase, chloroplastic (850 aa).

A chloroplast-targeting transit peptide spans 1 to 52 (MALPSSSLSSQIHTGATTQCIPHFHGSLNAGTSAGKRRSLYLRWGKGPSKIV). A substrate-binding site is contributed by Lys-250. Asp-383 and Asp-385 together coordinate Mg(2+). Residues 383–386 (DIDD) carry the DXDD motif motif. Residue Lys-470 coordinates substrate. Positions 602, 606, 746, 750, and 754 each coordinate Mg(2+). The short motif at 602-606 (DDLYD) is the DDXXD motif element.

The protein belongs to the terpene synthase family. Tpsd subfamily. Mg(2+) serves as cofactor.

It localises to the plastid. The protein localises to the chloroplast. The enzyme catalyses (2E,6E,10E)-geranylgeranyl diphosphate = (+)-copalyl diphosphate. The catalysed reaction is (+)-copalyl diphosphate = abieta-7,13-diene + diphosphate. It catalyses the reaction (+)-copalyl diphosphate = abieta-8(14),12-diene + diphosphate. It carries out the reaction (+)-copalyl diphosphate = neoabietadiene + diphosphate. It functions in the pathway terpene metabolism; oleoresin biosynthesis. In terms of biological role, involved in defensive oleoresin formation in conifers in response to insect attack or other injury. Involved in diterpene (C20) olefins biosynthesis. Bifunctional enzyme that catalyzes two sequential cyclizations of geranylgeranyl diphosphate (GGPP) to levopimaradiene. Levopimaradiene is the major products of the enzyme with abietadiene and neoabietadiene. No activity with farnesyl diphosphate (FPP) as substrate. The sequence is that of Bifunctional levopimaradiene synthase, chloroplastic from Pinus contorta (Shore pine).